Consider the following 274-residue polypeptide: MDPILLLKALILGIVEGLTEFLPISSTGHLILAGDLLNFNDDRGKLFEIVIQSGAILAVVWEYRERLLKVARGAFSEPAAQKFILNLFVAFLPLAILGLAFGRAIKAHLFNPVTVASTFILGAFVILWAERREHKIRIQTVDEMSMLDALKLGIAQAFALIPGTSRSGATIIGGLLFGLSRKAATEFSFFLAIPTLIVATFYQLYKERALLNADDLAMWAVGFVAAFVSAFLCVRWLLRYISTHDFTAFAWYRIAFGIVVLATWQFGWVQWAAD.

Transmembrane regions (helical) follow at residues 4–24 (ILLL…FLPI), 46–63 (LFEI…VWEY), 82–102 (KFIL…LAFG), 109–129 (LFNP…ILWA), 184–204 (ATEF…FYQL), 218–238 (MWAV…RWLL), and 249–269 (FAWY…FGWV).

The protein belongs to the UppP family.

It localises to the cell inner membrane. It catalyses the reaction di-trans,octa-cis-undecaprenyl diphosphate + H2O = di-trans,octa-cis-undecaprenyl phosphate + phosphate + H(+). Catalyzes the dephosphorylation of undecaprenyl diphosphate (UPP). Confers resistance to bacitracin. This is Undecaprenyl-diphosphatase from Dechloromonas aromatica (strain RCB).